A 576-amino-acid polypeptide reads, in one-letter code: DNA mismatch repair protein MutL (576 aa).

The protein belongs to the DNA mismatch repair MutL/HexB family.

This protein is involved in the repair of mismatches in DNA. It is required for dam-dependent methyl-directed DNA mismatch repair. May act as a 'molecular matchmaker', a protein that promotes the formation of a stable complex between two or more DNA-binding proteins in an ATP-dependent manner without itself being part of a final effector complex. In Chlamydia trachomatis serovar L2 (strain ATCC VR-902B / DSM 19102 / 434/Bu), this protein is DNA mismatch repair protein MutL.